We begin with the raw amino-acid sequence, 92 residues long: C-C motif chemokine 4-like (92 aa).

The signal sequence occupies residues 1–23 (MKLCVTVLSLLVLVAAFCSLALS). Disulfide bonds link cysteine 34–cysteine 58 and cysteine 35–cysteine 74.

Belongs to the intercrine beta (chemokine CC) family. As to quaternary structure, interacts with CCR5. In terms of tissue distribution, detected in B-cells.

It localises to the secreted. Its function is as follows. Chemokine that induces chemotaxis of cells expressing CCR5 or CCR1. Inhibits HIV replication in peripheral blood monocytes that express CCR5. The protein is C-C motif chemokine 4-like (CCL4L1) of Homo sapiens (Human).